The sequence spans 513 residues: Pantetheinase (513 aa).

The signal sequence occupies residues methionine 1 to serine 22. A CN hydrolase domain is found at alanine 40–serine 307. Glutamate 80 functions as the Proton acceptor in the catalytic mechanism. Asparagine 147 is a glycosylation site (N-linked (GlcNAc...) asparagine). The active-site Proton donor is lysine 179. The active-site Nucleophile is cysteine 212. Asparagine 315 and asparagine 353 each carry an N-linked (GlcNAc...) asparagine glycan. Residue glycine 487 is the site of GPI-anchor amidated glycine attachment. The propeptide at alanine 488–tryptophan 513 is removed in mature form.

The protein belongs to the carbon-nitrogen hydrolase superfamily. BTD/VNN family. In terms of assembly, monomer. Detected in kidney (at protein level).

The protein localises to the cell membrane. It carries out the reaction (R)-pantetheine + H2O = cysteamine + (R)-pantothenate. Its function is as follows. Amidohydrolase that hydrolyzes specifically one of the carboamide linkages in D-pantetheine thus recycling pantothenic acid (vitamin B5) and releasing cysteamine. The sequence is that of Pantetheinase (VNN1) from Sus scrofa (Pig).